Reading from the N-terminus, the 615-residue chain is Leucine aminopeptidase 2-1 (615 aa).

Residues 137–139 (QCQ) and 261–266 (PYGGME) each bind substrate. His290 contributes to the Zn(2+) binding site. The active-site Proton acceptor is Glu291. Zn(2+) contacts are provided by His294 and Glu313. Tyr380 acts as the Proton donor in catalysis.

The protein belongs to the peptidase M1 family. It depends on Zn(2+) as a cofactor.

Its subcellular location is the cytoplasm. It is found in the nucleus. The enzyme catalyses an epoxide + H2O = an ethanediol. Functionally, aminopeptidase that preferentially cleaves di- and tripeptides. Also has low epoxide hydrolase activity (in vitro). Can hydrolyze the epoxide leukotriene LTA(4) but it forms preferentially 5,6-dihydroxy-7,9,11,14-eicosatetraenoic acid rather than the cytokine leukotriene B(4) as the product compared to the homologous mammalian enzyme (in vitro). This chain is Leucine aminopeptidase 2-1, found in Meyerozyma guilliermondii (strain ATCC 6260 / CBS 566 / DSM 6381 / JCM 1539 / NBRC 10279 / NRRL Y-324) (Yeast).